A 264-amino-acid polypeptide reads, in one-letter code: Acyl-[acyl-carrier-protein]--UDP-N-acetylglucosamine O-acyltransferase (264 aa).

Belongs to the transferase hexapeptide repeat family. LpxA subfamily. In terms of assembly, homotrimer.

It localises to the cytoplasm. It catalyses the reaction a (3R)-hydroxyacyl-[ACP] + UDP-N-acetyl-alpha-D-glucosamine = a UDP-3-O-[(3R)-3-hydroxyacyl]-N-acetyl-alpha-D-glucosamine + holo-[ACP]. It participates in glycolipid biosynthesis; lipid IV(A) biosynthesis; lipid IV(A) from (3R)-3-hydroxytetradecanoyl-[acyl-carrier-protein] and UDP-N-acetyl-alpha-D-glucosamine: step 1/6. Involved in the biosynthesis of lipid A, a phosphorylated glycolipid that anchors the lipopolysaccharide to the outer membrane of the cell. The sequence is that of Acyl-[acyl-carrier-protein]--UDP-N-acetylglucosamine O-acyltransferase from Rickettsia conorii (strain ATCC VR-613 / Malish 7).